The following is a 713-amino-acid chain: Cyclomaltodextrin glucanotransferase (713 aa).

Positions 1-27 (MKKFLKSTAALALGLSLTFGLFSPAQA) are cleaved as a signal peptide. Positions 28-165 (APDTSVSNKQ…NIKVIIDFAP (138 aa)) are A1. Residues Asp-54, Asn-56, Asn-59, and Asn-60 each contribute to the Ca(2+) site. The cysteines at positions 70 and 77 are disulfide-linked. Gly-78 and Asp-80 together coordinate Ca(2+). A substrate-binding site is contributed by 127-128 (YW). Position 166 (Asn-166) interacts with Ca(2+). A b region spans residues 166-229 (NHTSPASSDQ…NLYDLADLNH (64 aa)). Substrate is bound by residues His-167 and 172 to 174 (SSD). Position 217 (Ile-217) interacts with Ca(2+). 220-223 (NLYD) is a substrate binding site. Asp-226 lines the Ca(2+) pocket. Residues 230–433 (NNSTVDVYLK…LRKCNPAIAY (204 aa)) form an A2 region. Arg-254 serves as a coordination point for substrate. Asp-256 acts as the Nucleophile in catalysis. A substrate-binding site is contributed by 259 to 260 (KH). Residue His-260 participates in Ca(2+) binding. Glu-284 acts as the Proton donor in catalysis. Position 342 (Ala-342) interacts with Ca(2+). 3 residues coordinate substrate: His-354, Asp-398, and Arg-402. Residues 434-522 (GSTQERWINN…GTAVWQYTAA (89 aa)) form a c region. Residues 523 to 609 (TATPTIGHVG…SNVYDNFEVL (87 aa)) are d. In terms of domain architecture, IPT/TIG spans 526 to 607 (PTIGHVGPMM…TASNVYDNFE (82 aa)). A Ca(2+)-binding site is contributed by Asp-604. Positions 608-713 (VLSGDQVSVR…TATINVNWQP (106 aa)) constitute a CBM20 domain. The segment at 610–713 (SGDQVSVRFV…TATINVNWQP (104 aa)) is e.

The protein belongs to the glycosyl hydrolase 13 family. Monomer. Ca(2+) serves as cofactor.

It localises to the secreted. It catalyses the reaction Cyclizes part of a (1-&gt;4)-alpha-D-glucan chain by formation of a (1-&gt;4)-alpha-D-glucosidic bond.. In Niallia circulans (Bacillus circulans), this protein is Cyclomaltodextrin glucanotransferase (cgt).